Reading from the N-terminus, the 346-residue chain is Cysteinyl leukotriene receptor 2 (346 aa).

Over 1 to 42 the chain is Extracellular; it reads MERKFMSLQPSISVSEMEPNGTFSNNNSRNCTIENFKREFFP. N20, N26, and N30 each carry an N-linked (GlcNAc...) asparagine glycan. Residues 43 to 63 form a helical membrane-spanning segment; that stretch reads IVYLIIFFWGVLGNGLSIYVF. The Cytoplasmic portion of the chain corresponds to 64-72; sequence LQPYKKSTS. A helical membrane pass occupies residues 73–93; it reads VNVFMLNLAISDLLFISTLPF. The Extracellular portion of the chain corresponds to 94–123; that stretch reads RADYYLRGSNWIFGDLACRIMSYSLYVNMY. The cysteines at positions 111 and 187 are disulfide-linked. A helical transmembrane segment spans residues 124-144; the sequence is SSIYFLTVLSVVRFLAMVHPF. Topologically, residues 145 to 153 are cytoplasmic; that stretch reads RLLHVTSIR. A helical membrane pass occupies residues 154 to 174; that stretch reads SAWILCGIIWILIMASSIMLL. Residues 175 to 204 lie on the Extracellular side of the membrane; sequence DSGSEQNGSVTSCLELNLYKIAKLQTMNYI. N181 carries an N-linked (GlcNAc...) asparagine glycan. The helical transmembrane segment at 205 to 225 threads the bilayer; it reads ALVVGCLLPFFTLSICYLLII. Residues 226-245 lie on the Cytoplasmic side of the membrane; sequence RVLLKVEVPESGLRVSHRKA. Residues 246–266 form a helical membrane-spanning segment; it reads LTTIIITLIIFFLCFLPYHTL. The Extracellular portion of the chain corresponds to 267–286; the sequence is RTVHLTTWKVGLCKDRLHKA. Residues 287–307 form a helical membrane-spanning segment; it reads LVITLALAAANACFNPLLYYF. The Cytoplasmic portion of the chain corresponds to 308–346; the sequence is AGENFKDRLKSALRKGHPQKAKTKCVFPVSVWLRKETRV.

This sequence belongs to the G-protein coupled receptor 1 family. In terms of tissue distribution, widely expressed, with highest levels in the heart, placenta, spleen, peripheral blood leukocytes and adrenal gland. In lung, expressed in the interstitial macrophages, and slightly in smooth muscle cells.

Its subcellular location is the cell membrane. Receptor for cysteinyl leukotrienes. The response is mediated via a G-protein that activates a phosphatidylinositol-calcium second messenger system. Stimulation by BAY u9773, a partial agonist, induces specific contractions of pulmonary veins and might also have an indirect role in the relaxation of the pulmonary vascular endothelium. The rank order of affinities for the leukotrienes is LTC4 = LTD4 &gt;&gt; LTE4. The chain is Cysteinyl leukotriene receptor 2 (CYSLTR2) from Homo sapiens (Human).